The chain runs to 199 residues: ParB-like protein Saci_1498 (199 aa).

This sequence belongs to the ParB family.

Probably part of a 4-gene DNA damage response locus in which the upstream ups system, in combination with this downstream locus, functions in homologous recombination to rescue Sulfolobales from DNA-damaging threats. This protein might function in the DNA transfer machinery. The chain is ParB-like protein Saci_1498 from Sulfolobus acidocaldarius (strain ATCC 33909 / DSM 639 / JCM 8929 / NBRC 15157 / NCIMB 11770).